The following is a 435-amino-acid chain: 5-methylthioadenosine/S-adenosylhomocysteine deaminase (435 aa).

The Zn(2+) site is built by histidine 65 and histidine 67. 3 residues coordinate substrate: glutamate 94, arginine 150, and histidine 189. Histidine 216 serves as a coordination point for Zn(2+). Substrate-binding residues include glutamate 219 and aspartate 304. Aspartate 304 is a binding site for Zn(2+).

Belongs to the metallo-dependent hydrolases superfamily. MTA/SAH deaminase family. Zn(2+) is required as a cofactor.

The catalysed reaction is S-adenosyl-L-homocysteine + H2O + H(+) = S-inosyl-L-homocysteine + NH4(+). It carries out the reaction S-methyl-5'-thioadenosine + H2O + H(+) = S-methyl-5'-thioinosine + NH4(+). Functionally, catalyzes the deamination of 5-methylthioadenosine and S-adenosyl-L-homocysteine into 5-methylthioinosine and S-inosyl-L-homocysteine, respectively. Is also able to deaminate adenosine. This Bacillus cereus (strain 03BB102) protein is 5-methylthioadenosine/S-adenosylhomocysteine deaminase.